The sequence spans 525 residues: BTB/POZ domain-containing protein At1g50280 (525 aa).

The BTB domain maps to 5-79; sequence NDLKINLNGQ…CYHNGEILID (75 aa). In terms of domain architecture, NPH3 spans 200–466; the sequence is EWWFEDMTNL…IEALKSRCGN (267 aa).

This sequence belongs to the NPH3 family.

It functions in the pathway protein modification; protein ubiquitination. Its function is as follows. May act as a substrate-specific adapter of an E3 ubiquitin-protein ligase complex (CUL3-RBX1-BTB) which mediates the ubiquitination and subsequent proteasomal degradation of target proteins. In Arabidopsis thaliana (Mouse-ear cress), this protein is BTB/POZ domain-containing protein At1g50280.